The chain runs to 123 residues: Small ribosomal subunit protein uS12 (123 aa).

Asp89 carries the 3-methylthioaspartic acid modification. The interval 104-123 (TAGVQDRRQGRSKYGAKRPK) is disordered. The segment covering 113 to 123 (GRSKYGAKRPK) has biased composition (basic residues).

Belongs to the universal ribosomal protein uS12 family. Part of the 30S ribosomal subunit. Contacts proteins S8 and S17. May interact with IF1 in the 30S initiation complex.

Its function is as follows. With S4 and S5 plays an important role in translational accuracy. Interacts with and stabilizes bases of the 16S rRNA that are involved in tRNA selection in the A site and with the mRNA backbone. Located at the interface of the 30S and 50S subunits, it traverses the body of the 30S subunit contacting proteins on the other side and probably holding the rRNA structure together. The combined cluster of proteins S8, S12 and S17 appears to hold together the shoulder and platform of the 30S subunit. The polypeptide is Small ribosomal subunit protein uS12 (Oleidesulfovibrio alaskensis (strain ATCC BAA-1058 / DSM 17464 / G20) (Desulfovibrio alaskensis)).